A 620-amino-acid polypeptide reads, in one-letter code: Putative ribonuclease H protein At1g65750 (620 aa).

The RNase H type-1 domain maps to C456–S586. 4 residues coordinate Mg(2+): D465, E505, D529, and D578.

Mg(2+) serves as cofactor.

The catalysed reaction is Endonucleolytic cleavage to 5'-phosphomonoester.. This Arabidopsis thaliana (Mouse-ear cress) protein is Putative ribonuclease H protein At1g65750.